Reading from the N-terminus, the 568-residue chain is MQSKGNLGLLMLILTGYLFIFTGSSFGSAYLLEVPVWESNCLSFSFSFLLDNVSMIFVGTVLVISGSVATYCKWYMAEELYYNRFMGLVWLFVLSMVFMILVPNLLMLLIGWDGLGLTSFLLVAYYQNNKSLSAAMLTALTNRIGDVLVLISISIFLSEGGWLIYSYHPVQMWLNLGFMVVFAGMTKSAQMPFCAWLPAAMAAPTPVSSLVHSSTLVTAGVYLVLRSFYIISSNPYVTQVLMILSLFTLVLAGSSAVFAFDLKKVIALSTLSQLSLMMFSISILLPSVAFFHLVTHAVFKALLFLGAGGVIHSNQSIQDIRGLSSLWQGLPVSMGAMSVAIVSLSGAPFMSGFFSKDLMIELSMMDSSVTYGCYLLELLGLIFTSFYSARIVFSVMLGSNYVNNSTLRINEHLNMQTPFLSLYIGAIILGVVLGSKMESFGFVVVLENYESLSVFFIPFAGLILWRGVISKLGSSPWSSAKSLSFFLSMWFMESLTSHPGKVIFFKGSSTVAQSLDQGWLELLGPQGVHAGLGQFSCLNEIVQKNYFTYQLVVWGLLVAGGVSLIIFM.

14 helical membrane passes run 7 to 27 (LGLL…SSFG), 44 to 64 (FSFS…VLVI), 90 to 110 (WLFV…MLLI), 144 to 164 (IGDV…GWLI), 165 to 185 (YSYH…FAGM), 210 to 232 (LVHS…YIIS), 240 to 260 (VLMI…VFAF), 274 to 294 (LSLM…FHLV), 297 to 317 (AVFK…NQSI), 334 to 354 (MGAM…SGFF), 378 to 398 (LLGL…VMLG), 426 to 446 (AIIL…VVVL), 452 to 472 (LSVF…ISKL), and 547 to 567 (FTYQ…LIIF).

This sequence belongs to the complex I subunit 5 family.

The protein localises to the mitochondrion inner membrane. It carries out the reaction a ubiquinone + NADH + 5 H(+)(in) = a ubiquinol + NAD(+) + 4 H(+)(out). In terms of biological role, core subunit of the mitochondrial membrane respiratory chain NADH dehydrogenase (Complex I) that is believed to belong to the minimal assembly required for catalysis. Complex I functions in the transfer of electrons from NADH to the respiratory chain. The immediate electron acceptor for the enzyme is believed to be ubiquinone. The chain is NADH-ubiquinone oxidoreductase chain 5 (ND5) from Mytilus edulis (Blue mussel).